Reading from the N-terminus, the 327-residue chain is GTPase Obg (327 aa).

The Obg domain maps to 1–159 (MQFIDQANII…WEVQLELKLL (159 aa)). Residues 160 to 327 (AEVGIIGLPN…SLLSEVWKRI (168 aa)) enclose the OBG-type G domain. ATP is bound by residues 166 to 173 (GLPNAGKS), 191 to 195 (FTTLI), 213 to 216 (DIPG), 280 to 283 (NKIE), and 309 to 311 (SSS). Serine 173 and threonine 193 together coordinate Mg(2+).

This sequence belongs to the TRAFAC class OBG-HflX-like GTPase superfamily. OBG GTPase family. As to quaternary structure, monomer. Mg(2+) serves as cofactor.

Its subcellular location is the cytoplasm. Its function is as follows. An essential GTPase which binds GTP, GDP and possibly (p)ppGpp with moderate affinity, with high nucleotide exchange rates and a fairly low GTP hydrolysis rate. Plays a role in control of the cell cycle, stress response, ribosome biogenesis and in those bacteria that undergo differentiation, in morphogenesis control. The sequence is that of GTPase Obg from Prochlorococcus marinus (strain AS9601).